The following is a 336-amino-acid chain: UPF0104 membrane protein MJ1595 (336 aa).

9 helical membrane passes run 9-29 (STIL…YIGL), 40-60 (NPEY…ILSA), 68-88 (ILGY…GLFI), 127-147 (VLDT…FVVT), 154-174 (YLIL…YLIA), 223-243 (WEVV…ILKL), 245-265 (LLFL…VYLI), 285-305 (VMIL…AVTL), and 306-326 (LDRL…MLII).

It belongs to the UPF0104 family.

Its subcellular location is the cell membrane. This chain is UPF0104 membrane protein MJ1595, found in Methanocaldococcus jannaschii (strain ATCC 43067 / DSM 2661 / JAL-1 / JCM 10045 / NBRC 100440) (Methanococcus jannaschii).